We begin with the raw amino-acid sequence, 262 residues long: Indole-3-glycerol phosphate synthase (262 aa).

Belongs to the TrpC family.

The enzyme catalyses 1-(2-carboxyphenylamino)-1-deoxy-D-ribulose 5-phosphate + H(+) = (1S,2R)-1-C-(indol-3-yl)glycerol 3-phosphate + CO2 + H2O. It participates in amino-acid biosynthesis; L-tryptophan biosynthesis; L-tryptophan from chorismate: step 4/5. The polypeptide is Indole-3-glycerol phosphate synthase (Leptothrix cholodnii (strain ATCC 51168 / LMG 8142 / SP-6) (Leptothrix discophora (strain SP-6))).